A 335-amino-acid chain; its full sequence is Ficolin-1 (335 aa).

The N-terminal stretch at 1-17 (MWWPMLWAFPVLLCLCS) is a signal peptide. The segment at 47 to 114 (SCPSFPGPPG…TASPLGQKEL (68 aa)) is disordered. The Collagen-like domain occupies 50–88 (SFPGPPGPKGEPGSPAGRGERGLQGSPGKMGPPGSKGEP). Low complexity predominate over residues 75–88 (SPGKMGPPGSKGEP). One can recognise a Fibrinogen C-terminal domain in the interval 117-335 (ALCRRGPRSC…KVAEMKIRAS (219 aa)). 2 disulfides stabilise this stretch: Cys119–Cys147 and Cys126–Cys154. An a domain; contributes to trimerization region spans residues 123-162 (PRSCKDLLTRGIFLTGWYTIYLPDCRPLTVLCDMDVDGGG). The b domain; contributes to trimerization stretch occupies residues 163–251 (WTVFQRRVDG…LTLGQFLEGT (89 aa)). Asp270 is a binding site for Ca(2+). Asn271 is a glycosylation site (N-linked (GlcNAc...) asparagine). Asp272 is a Ca(2+) binding site. Cys279 and Cys292 are oxidised to a cystine. Residue 291 to 293 (DCH) coordinates a carbohydrate. Residues 326-335 (KVAEMKIRAS) are p domain.

This sequence belongs to the ficolin lectin family. As to quaternary structure, homotrimer. Interacts with elastin/ELN. Interacts (via Fibrinogen C-terminal domain) with FFAR2. Interacts with CRP; may regulate monocyte activation by FCN1.

It localises to the secreted. It is found in the cell membrane. Extracellular lectin functioning as a pattern-recognition receptor in innate immunity. Binds the sugar moieties of pathogen-associated molecular patterns (PAMPs) displayed on microbes and activates the lectin pathway of the complement system. May also activate monocytes through a G protein-coupled receptor, FFAR2, inducing the secretion of interleukin-8/IL-8. Binds preferentially to 9-O-acetylated 2-6-linked sialic acid derivatives and to various glycans containing sialic acid engaged in a 2-3 linkage. The polypeptide is Ficolin-1 (Fcn1) (Rattus norvegicus (Rat)).